A 216-amino-acid polypeptide reads, in one-letter code: GTP-binding nuclear protein spi1 (216 aa).

Residues 6 to 170 (NVPTFKLVLV…LWLARKLVGN (165 aa)) form the Small GTPase Ran-type domain. Position 17 to 24 (17 to 24 (DGGTGKTT)) interacts with GTP. Threonine 20 carries the post-translational modification Phosphothreonine. Residues 36-44 (KKYIATLGV) are switch-I. GTP contacts are provided by residues glycine 67, 121-124 (NKVD), and 149-151 (SAK). The interval 67–83 (GQEKLGGLRDGYYIQGQ) is switch-II.

The protein belongs to the small GTPase superfamily. Ran family. As to quaternary structure, oligomer of dis3, pim1 and spi1. Found in a nuclear export complex with RanGTP, exportin and pre-miRNA. Interacts with fft3.

The protein localises to the nucleus. In terms of biological role, GTP-binding protein involved in nucleocytoplasmic transport. Required for the import of protein into the nucleus and also for RNA export. This is GTP-binding nuclear protein spi1 (spi1) from Schizosaccharomyces pombe (strain 972 / ATCC 24843) (Fission yeast).